We begin with the raw amino-acid sequence, 121 residues long: Large ribosomal subunit protein uL14 (121 aa).

The protein belongs to the universal ribosomal protein uL14 family. As to quaternary structure, part of the 50S ribosomal subunit. Forms a cluster with proteins L3 and L19. In the 70S ribosome, L14 and L19 interact and together make contacts with the 16S rRNA in bridges B5 and B8.

In terms of biological role, binds to 23S rRNA. Forms part of two intersubunit bridges in the 70S ribosome. The chain is Large ribosomal subunit protein uL14 from Akkermansia muciniphila (strain ATCC BAA-835 / DSM 22959 / JCM 33894 / BCRC 81048 / CCUG 64013 / CIP 107961 / Muc).